Reading from the N-terminus, the 510-residue chain is Allene oxide synthase 2, chloroplastic (510 aa).

The N-terminal 31 residues, 1–31 (MALTLSFSLPLPSLHQKIPSKYSTFRPIIVS), are a transit peptide targeting the chloroplast. Heme b-binding residues include Lys-127, His-158, and Lys-162. 2 residues coordinate (13S)-hydroperoxy-(9Z,11E)-octadecadienoate: Asn-315 and Lys-321. Asn-315 contributes to the (13S)-hydroperoxy-(9Z,11E,15Z)-octadecatrienoate binding site. 2 residues coordinate heme b: Lys-463 and Cys-465.

This sequence belongs to the cytochrome P450 family. It depends on heme b as a cofactor. Expressed in flower buds, leaves, roots, stems, petioles and cotyledons. Not detected in ripe fruits. Expressed in sieve elements.

Its subcellular location is the plastid. The protein resides in the chloroplast inner membrane. The catalysed reaction is (13S)-hydroperoxy-(9Z,11E,15Z)-octadecatrienoate = (9Z,13S,15Z)-12,13-epoxyoctadeca-9,11,15-trienoate + H2O. The enzyme catalyses (13S)-hydroperoxy-(9Z,11E)-octadecadienoate = (9Z,13S)-12,13-epoxyoctadeca-9,11-dienoate + H2O. In terms of biological role, cytochrome P450 of the CYP74A subfamily involved in the biosynthesis of jasmonic acid from lipoxygenase-derived hydroperoxides of free fatty acids. Catalyzes the synthesis of unstable allene oxide, which is further converted spontaneously by hydrolysis or cyclization. Metabolizes 13- but not 9-hydroperoxides of linoleic and linolenic acids. Can use 15S-hydroperoxy-11(Z),13(E),17(Z)-eicosatrienoic acid (15-HPET) and 13S-hydroperoxy-9(Z),11(E),15(Z)-octadecatrienoic acid (13-HPOT) as substrates, but only 50% activity with 13S-hydroperoxy-9(Z),11(E)-octadecadienoic acid (13-HPOD). In Solanum lycopersicum (Tomato), this protein is Allene oxide synthase 2, chloroplastic.